Consider the following 254-residue polypeptide: Alcohol dehydrogenase (254 aa).

Residue 9–32 participates in NAD(+) binding; sequence IFVAGLGGIGLDTSRELVKRDLKN. Ser138 contributes to the substrate binding site. Catalysis depends on Tyr151, which acts as the Proton acceptor.

It belongs to the short-chain dehydrogenases/reductases (SDR) family. Homodimer.

It catalyses the reaction a primary alcohol + NAD(+) = an aldehyde + NADH + H(+). The enzyme catalyses a secondary alcohol + NAD(+) = a ketone + NADH + H(+). This chain is Alcohol dehydrogenase (Adh), found in Drosophila paulistorum (Fruit fly).